A 179-amino-acid polypeptide reads, in one-letter code: uncharacterized protein (179 aa).

A signal peptide (or 24) is located at residues 1–27 (MKTISKQLSAVIFPFIFSACVSQSASS).

This is an uncharacterized protein from Haemophilus influenzae (strain ATCC 51907 / DSM 11121 / KW20 / Rd).